Consider the following 359-residue polypeptide: Phospho-N-acetylmuramoyl-pentapeptide-transferase (359 aa).

Transmembrane regions (helical) follow at residues Y21–G41, T73–L93, I98–L118, G143–F163, V166–S186, P202–I222, V237–Y257, I261–I281, I286–V306, and K336–L356.

It belongs to the glycosyltransferase 4 family. MraY subfamily. Mg(2+) serves as cofactor.

The protein localises to the cell inner membrane. The enzyme catalyses UDP-N-acetyl-alpha-D-muramoyl-L-alanyl-gamma-D-glutamyl-meso-2,6-diaminopimeloyl-D-alanyl-D-alanine + di-trans,octa-cis-undecaprenyl phosphate = di-trans,octa-cis-undecaprenyl diphospho-N-acetyl-alpha-D-muramoyl-L-alanyl-D-glutamyl-meso-2,6-diaminopimeloyl-D-alanyl-D-alanine + UMP. It participates in cell wall biogenesis; peptidoglycan biosynthesis. Catalyzes the initial step of the lipid cycle reactions in the biosynthesis of the cell wall peptidoglycan: transfers peptidoglycan precursor phospho-MurNAc-pentapeptide from UDP-MurNAc-pentapeptide onto the lipid carrier undecaprenyl phosphate, yielding undecaprenyl-pyrophosphoryl-MurNAc-pentapeptide, known as lipid I. This chain is Phospho-N-acetylmuramoyl-pentapeptide-transferase, found in Desulfosudis oleivorans (strain DSM 6200 / JCM 39069 / Hxd3) (Desulfococcus oleovorans).